The chain runs to 908 residues: Translation initiation factor IF-2 (908 aa).

The tract at residues 145 to 312 (EIPGLTQRAK…KGKKRQAEKI (168 aa)) is disordered. The span at 167 to 177 (VVERPEARPSA) shows a compositional bias: basic and acidic residues. Composition is skewed to low complexity over residues 194-217 (RPEG…PRPG) and 263-276 (VAGA…GAAV). Over residues 278 to 296 (KRKEEFKKTELFEKHERVF) the composition is skewed to basic and acidic residues. Positions 408-577 (KRPPVVTIMG…LLQADVLELK (170 aa)) constitute a tr-type G domain. The G1 stretch occupies residues 417–424 (GHVDHGKT). Residue 417-424 (GHVDHGKT) coordinates GTP. The interval 442–446 (GITQH) is G2. Residues 463 to 466 (DTPG) form a G3 region. GTP-binding positions include 463 to 467 (DTPGH) and 517 to 520 (NKID). The interval 517 to 520 (NKID) is G4. Residues 553 to 555 (SAK) are G5.

Belongs to the TRAFAC class translation factor GTPase superfamily. Classic translation factor GTPase family. IF-2 subfamily.

Its subcellular location is the cytoplasm. Functionally, one of the essential components for the initiation of protein synthesis. Protects formylmethionyl-tRNA from spontaneous hydrolysis and promotes its binding to the 30S ribosomal subunits. Also involved in the hydrolysis of GTP during the formation of the 70S ribosomal complex. In Geotalea daltonii (strain DSM 22248 / JCM 15807 / FRC-32) (Geobacter daltonii), this protein is Translation initiation factor IF-2.